A 2345-amino-acid polypeptide reads, in one-letter code: Nonribisomal peptide synthetase malG (2345 aa).

Residues 226-620 (FSEQAKKNPT…VGRMGTVVKV (395 aa)) form an adenylation 1 region. Positions 766–839 (TENETLLRLL…EAAGTMISAG (74 aa)) constitute a Carrier 1 domain. The residue at position 800 (Ser-800) is an O-(pantetheine 4'-phosphoryl)serine. Positions 877-1292 (EEIYPSTPLQ…LLCPSDKSKL (416 aa)) are condensation 1. Positions 1317-1707 (VRSERTAVSA…GRKNREVKLR (391 aa)) are adenylation 2. Positions 1843-1926 (QPHESTALFV…DIARLIEGVK (84 aa)) constitute a Carrier 2 domain. Ser-1885 carries the post-translational modification O-(pantetheine 4'-phosphoryl)serine. A reductase (R) domain region spans residues 1969-2256 (GMSVFLTGGT…PRQLNALQSE (288 aa)).

Belongs to the NRP synthetase family.

The enzyme catalyses L-proline + L-tryptophan + 2 ATP + NADPH = (S)-3-(indol-3-ylmethyl)-6,7,8,8a-tetrahydropyrrolo[1,2-a]pyrazin-1-one + 2 AMP + 2 diphosphate + NADP(+) + H2O + H(+). Nonribisomal peptide synthetase; part of the gene cluster that mediates the biosynthesis of malbrancheamide, a dichlorinated fungal indole alkaloid that belongs to a family of natural products containing a characteristic bicyclo[2.2.2]diazaoctane core. The first step of malbrancheamide biosynthesis involves coupling of L-proline and L-tryptophan by malG, a bimodular NRPS, to produce L-Pro-L-Trp aldehyde through reductive offloading. This compound undergoes spontaneous cyclization and dehydration to give a dienamine which is reverse prenylated at C-2 by malE. The other prenyltransferase present in the cluster, malB, displays modest activity, suggesting that may be a redundant gene in the pathway. Subsequently, a [4+2] Diels-Alder cyclo-addition catalyzed by the bifunctional enzyme malC forms the characteristic bicyclo[2.2.2]diazaoctane ring of premalbrancheamid. Finally, the flavin-dependent halogenase malA catalyzes the iterative dichlorination of the indole ring of premalbrancheamide to yield C-9 monochlorinated malbrancheamide B, C-8 monochlorinated isomalbrancheamide B, and dichlorinated malbrancheamide. MalA is also able to brominate premalbrancheamide at C-9 to yield malbrancheamide C, and, to a lesser extend, at C-8 to yield isomalbrancheamide C. Finally, malA can brominate C-9 monochlorinated malbrancheamide B at C-8 to yield malbrancheamide D, or C-8 monochlorinated isomalbrancheamide B at C-9 to produce isomalbrancheamide D. The polypeptide is Nonribisomal peptide synthetase malG (Malbranchea aurantiaca).